The sequence spans 514 residues: Bifunctional purine biosynthesis protein PurH (514 aa).

Residues 1 to 145 enclose the MGS-like domain; it reads MIKRALISVS…KNYQDVVVIV (145 aa).

The protein belongs to the PurH family.

It carries out the reaction (6R)-10-formyltetrahydrofolate + 5-amino-1-(5-phospho-beta-D-ribosyl)imidazole-4-carboxamide = 5-formamido-1-(5-phospho-D-ribosyl)imidazole-4-carboxamide + (6S)-5,6,7,8-tetrahydrofolate. It catalyses the reaction IMP + H2O = 5-formamido-1-(5-phospho-D-ribosyl)imidazole-4-carboxamide. It participates in purine metabolism; IMP biosynthesis via de novo pathway; 5-formamido-1-(5-phospho-D-ribosyl)imidazole-4-carboxamide from 5-amino-1-(5-phospho-D-ribosyl)imidazole-4-carboxamide (10-formyl THF route): step 1/1. It functions in the pathway purine metabolism; IMP biosynthesis via de novo pathway; IMP from 5-formamido-1-(5-phospho-D-ribosyl)imidazole-4-carboxamide: step 1/1. In Acetivibrio thermocellus (strain ATCC 27405 / DSM 1237 / JCM 9322 / NBRC 103400 / NCIMB 10682 / NRRL B-4536 / VPI 7372) (Clostridium thermocellum), this protein is Bifunctional purine biosynthesis protein PurH.